The chain runs to 444 residues: tRNA-2-methylthio-N(6)-dimethylallyladenosine synthase (444 aa).

One can recognise an MTTase N-terminal domain in the interval 10 to 126 (SSFYIHTFGC…LAGLVAGLRE (117 aa)). [4Fe-4S] cluster is bound by residues C19, C55, C89, C163, C167, and C170. The 231-residue stretch at 149-379 (RAGSISAFLP…IELQNAISRE (231 aa)) folds into the Radical SAM core domain. The TRAM domain maps to 382 to 444 (QREIGKTVEV…TSATLSGEAV (63 aa)).

The protein belongs to the methylthiotransferase family. MiaB subfamily. As to quaternary structure, monomer. It depends on [4Fe-4S] cluster as a cofactor.

The protein localises to the cytoplasm. The catalysed reaction is N(6)-dimethylallyladenosine(37) in tRNA + (sulfur carrier)-SH + AH2 + 2 S-adenosyl-L-methionine = 2-methylsulfanyl-N(6)-dimethylallyladenosine(37) in tRNA + (sulfur carrier)-H + 5'-deoxyadenosine + L-methionine + A + S-adenosyl-L-homocysteine + 2 H(+). Its function is as follows. Catalyzes the methylthiolation of N6-(dimethylallyl)adenosine (i(6)A), leading to the formation of 2-methylthio-N6-(dimethylallyl)adenosine (ms(2)i(6)A) at position 37 in tRNAs that read codons beginning with uridine. This Chlorobaculum tepidum (strain ATCC 49652 / DSM 12025 / NBRC 103806 / TLS) (Chlorobium tepidum) protein is tRNA-2-methylthio-N(6)-dimethylallyladenosine synthase.